Reading from the N-terminus, the 228-residue chain is Octanoyltransferase (228 aa).

A BPL/LPL catalytic domain is found at glycine 40–proline 225. Substrate contacts are provided by residues arginine 79–histidine 86, alanine 156–glycine 158, and glycine 169–alanine 171. The active-site Acyl-thioester intermediate is the cysteine 187.

The protein belongs to the LipB family.

It localises to the cytoplasm. The catalysed reaction is octanoyl-[ACP] + L-lysyl-[protein] = N(6)-octanoyl-L-lysyl-[protein] + holo-[ACP] + H(+). It functions in the pathway protein modification; protein lipoylation via endogenous pathway; protein N(6)-(lipoyl)lysine from octanoyl-[acyl-carrier-protein]: step 1/2. Its function is as follows. Catalyzes the transfer of endogenously produced octanoic acid from octanoyl-acyl-carrier-protein onto the lipoyl domains of lipoate-dependent enzymes. Lipoyl-ACP can also act as a substrate although octanoyl-ACP is likely to be the physiological substrate. The sequence is that of Octanoyltransferase from Acidiphilium cryptum (strain JF-5).